A 98-amino-acid polypeptide reads, in one-letter code: MSEAQTAVAAAAPAVKNTRTLVGKVVSDKRAKTVTVLVERRAKHELYGKIVARSRKYHAHDENGDYKMGDVVEISESRPLSKTKNWVVTRLVEKARAV.

Belongs to the universal ribosomal protein uS17 family. In terms of assembly, part of the 30S ribosomal subunit.

In terms of biological role, one of the primary rRNA binding proteins, it binds specifically to the 5'-end of 16S ribosomal RNA. This Leptothrix cholodnii (strain ATCC 51168 / LMG 8142 / SP-6) (Leptothrix discophora (strain SP-6)) protein is Small ribosomal subunit protein uS17.